A 338-amino-acid chain; its full sequence is Ketol-acid reductoisomerase (NADP(+)) (338 aa).

The 181-residue stretch at 1–181 (MQVYYDKDAD…GGGRAGVIET (181 aa)) folds into the KARI N-terminal Rossmann domain. Residues 24 to 27 (YGSQ), Arg47, Ser50, Ser52, and 82 to 85 (DEHQ) contribute to the NADP(+) site. Residue His107 is part of the active site. NADP(+) is bound at residue Gly133. The 146-residue stretch at 182–327 (SFREETETDL…ERLRGMMPWI (146 aa)) folds into the KARI C-terminal knotted domain. The Mg(2+) site is built by Asp190, Glu194, Glu226, and Glu230. Residue Ser251 coordinates substrate.

It belongs to the ketol-acid reductoisomerase family. The cofactor is Mg(2+).

It carries out the reaction (2R)-2,3-dihydroxy-3-methylbutanoate + NADP(+) = (2S)-2-acetolactate + NADPH + H(+). The catalysed reaction is (2R,3R)-2,3-dihydroxy-3-methylpentanoate + NADP(+) = (S)-2-ethyl-2-hydroxy-3-oxobutanoate + NADPH + H(+). Its pathway is amino-acid biosynthesis; L-isoleucine biosynthesis; L-isoleucine from 2-oxobutanoate: step 2/4. It functions in the pathway amino-acid biosynthesis; L-valine biosynthesis; L-valine from pyruvate: step 2/4. In terms of biological role, involved in the biosynthesis of branched-chain amino acids (BCAA). Catalyzes an alkyl-migration followed by a ketol-acid reduction of (S)-2-acetolactate (S2AL) to yield (R)-2,3-dihydroxy-isovalerate. In the isomerase reaction, S2AL is rearranged via a Mg-dependent methyl migration to produce 3-hydroxy-3-methyl-2-ketobutyrate (HMKB). In the reductase reaction, this 2-ketoacid undergoes a metal-dependent reduction by NADPH to yield (R)-2,3-dihydroxy-isovalerate. In Alkalilimnicola ehrlichii (strain ATCC BAA-1101 / DSM 17681 / MLHE-1), this protein is Ketol-acid reductoisomerase (NADP(+)).